The chain runs to 644 residues: 1-deoxy-D-xylulose-5-phosphate synthase (644 aa).

Residues H72 and 113 to 115 (GHA) contribute to the thiamine diphosphate site. D144 contacts Mg(2+). Thiamine diphosphate is bound by residues 145–146 (GA), N174, Y287, and E370. N174 lines the Mg(2+) pocket.

The protein belongs to the transketolase family. DXPS subfamily. In terms of assembly, homodimer. The cofactor is Mg(2+). It depends on thiamine diphosphate as a cofactor.

It catalyses the reaction D-glyceraldehyde 3-phosphate + pyruvate + H(+) = 1-deoxy-D-xylulose 5-phosphate + CO2. The protein operates within metabolic intermediate biosynthesis; 1-deoxy-D-xylulose 5-phosphate biosynthesis; 1-deoxy-D-xylulose 5-phosphate from D-glyceraldehyde 3-phosphate and pyruvate: step 1/1. Catalyzes the acyloin condensation reaction between C atoms 2 and 3 of pyruvate and glyceraldehyde 3-phosphate to yield 1-deoxy-D-xylulose-5-phosphate (DXP). The polypeptide is 1-deoxy-D-xylulose-5-phosphate synthase (Prochlorococcus marinus (strain MIT 9313)).